The chain runs to 199 residues: dITP/XTP pyrophosphatase (199 aa).

12–17 (SGNAGK) provides a ligand contact to substrate. D73 functions as the Proton acceptor in the catalytic mechanism. D73 lines the Mg(2+) pocket. Substrate-binding positions include S74, 157-160 (FGYD), K180, and 185-186 (HR).

Belongs to the HAM1 NTPase family. Homodimer. Requires Mg(2+) as cofactor.

The enzyme catalyses XTP + H2O = XMP + diphosphate + H(+). It carries out the reaction dITP + H2O = dIMP + diphosphate + H(+). The catalysed reaction is ITP + H2O = IMP + diphosphate + H(+). In terms of biological role, pyrophosphatase that catalyzes the hydrolysis of nucleoside triphosphates to their monophosphate derivatives, with a high preference for the non-canonical purine nucleotides XTP (xanthosine triphosphate), dITP (deoxyinosine triphosphate) and ITP. Seems to function as a house-cleaning enzyme that removes non-canonical purine nucleotides from the nucleotide pool, thus preventing their incorporation into DNA/RNA and avoiding chromosomal lesions. This Neisseria meningitidis serogroup B (strain ATCC BAA-335 / MC58) protein is dITP/XTP pyrophosphatase.